The following is a 215-amino-acid chain: Cytochrome b6 (215 aa).

Residues 32–52 (IFYCLGGITFTCFLVQVATGF) form a helical membrane-spanning segment. Cys-35 contributes to the heme c binding site. Residues His-86 and His-100 each coordinate heme b. The next 3 membrane-spanning stretches (helical) occupy residues 90 to 110 (ASMM…TGGF), 116 to 136 (LTWT…VTGY), and 186 to 206 (LHTF…FLMI). 2 residues coordinate heme b: His-187 and His-202.

It belongs to the cytochrome b family. PetB subfamily. The 4 large subunits of the cytochrome b6-f complex are cytochrome b6, subunit IV (17 kDa polypeptide, PetD), cytochrome f and the Rieske protein, while the 4 small subunits are PetG, PetL, PetM and PetN. The complex functions as a dimer. Heme b serves as cofactor. Requires heme c as cofactor.

Its subcellular location is the plastid. It localises to the chloroplast thylakoid membrane. In terms of biological role, component of the cytochrome b6-f complex, which mediates electron transfer between photosystem II (PSII) and photosystem I (PSI), cyclic electron flow around PSI, and state transitions. The polypeptide is Cytochrome b6 (Stigeoclonium helveticum (Green alga)).